The primary structure comprises 354 residues: cAMP-dependent protein kinase catalytic subunit 2 (354 aa).

A Protein kinase domain is found at 45–301; sequence YITRAVLGNG…SSDVKSHPWF (257 aa). ATP-binding positions include 51–59 and lysine 74; that span reads LGNGSFGTV. Residue aspartate 168 is the Proton acceptor of the active site. In terms of domain architecture, AGC-kinase C-terminal spans 302 to 354; it reads QGVDWFGILNQEVTAPYQPTISGAEDLSNFENFEFKDRYKSRINRHPELFANF.

The protein belongs to the protein kinase superfamily. AGC Ser/Thr protein kinase family. cAMP subfamily. As to expression, more abundant in adult body than adult head.

It carries out the reaction L-seryl-[protein] + ATP = O-phospho-L-seryl-[protein] + ADP + H(+). It catalyses the reaction L-threonyl-[protein] + ATP = O-phospho-L-threonyl-[protein] + ADP + H(+). This chain is cAMP-dependent protein kinase catalytic subunit 2 (Pka-C2), found in Drosophila melanogaster (Fruit fly).